The sequence spans 131 residues: Tegument protein ORF52 (131 aa).

Positions 103-131 (SDGGTAKPPPGANNRRRRGASTTRAGVDD) are disordered. A compositionally biased stretch (low complexity) spans 122 to 131 (ASTTRAGVDD). Residue Ser-123 is modified to Phosphoserine; by host.

The protein belongs to the herpesviridae BLRF2 family. As to quaternary structure, homooligomer; homooligomerizes and binds double-stranded DNA (dsDNA) cooperatively. Interacts with host CGAS. Interacts with PQBP1.

It localises to the host cytoplasm. The protein resides in the virion tegument. Functionally, plays a role in the inhibition of host innate immune system by targeting the CGAS enzymatic activity which is the principal cytosolic DNA sensor that detects invading viral DNA. Acts by inhibiting CGAS-DNA phase separation: directly binds double-stranded DNA (dsDNA) in a length dependent but sequence independent manner and is able to form DNA-induced phase separation in infected cells. DNA phase separation of ORF52 mediates disruption of liquid-like droplets in which CGAS is activated, thereby preventing CGAS activity. Targets also the HDP-RNP complex composed of DNA-PK subunits and paraspeckle proteins. This complex is a key nuclear regulator of DNA-mediated activation of innate immune response through the cGAS-STING pathway. This Homo sapiens (Human) protein is Tegument protein ORF52.